Here is a 321-residue protein sequence, read N- to C-terminus: uncharacterized protein (321 aa).

Val-2 is subject to N-acetylvaline. The segment at 37–63 (SEASRLLTPQTSSNHALSKMQKDDDIR) is disordered. Polar residues predominate over residues 43–52 (LTPQTSSNHA). Thr-44 bears the Phosphothreonine mark. Residues Ser-49, Ser-69, Ser-121, Ser-126, Ser-129, Ser-137, and Ser-139 each carry the phosphoserine modification. 2 disordered regions span residues 115–270 (KKQR…YSIS) and 283–321 (ETLEEEQEDAEKEGVLMEDEGNEEYTKDLEEAANKAQPQ). 3 stretches are compositionally biased toward polar residues: residues 120–145 (KSINSESFSSPSLRASKSNSLITSTD), 153–162 (KYSSSGTPEN), and 178–189 (SYGQMIKNNSNR). Thr-159 bears the Phosphothreonine mark. Residues 204-229 (EIDHTAPEKSEKRQERSGRSFDRQKS) are compositionally biased toward basic and acidic residues. Residues 237–253 (LSRSISRGPTKNKTVSP) show a composition bias toward polar residues. Phosphoserine occurs at positions 238, 240, 242, and 270. Acidic residues predominate over residues 284–305 (TLEEEQEDAEKEGVLMEDEGNE). Basic and acidic residues predominate over residues 306 to 315 (EYTKDLEEAA).

It is found in the cytoplasm. This is an uncharacterized protein from Saccharomyces cerevisiae (strain ATCC 204508 / S288c) (Baker's yeast).